The primary structure comprises 416 residues: 3-hydroxy-3-methylglutaryl coenzyme A reductase AN1593 (416 aa).

Glu103 functions as the Charge relay system in the catalytic mechanism. The N-linked (GlcNAc...) asparagine glycan is linked to Asn167. The active-site Charge relay system is the Lys236. Asn277 is a glycosylation site (N-linked (GlcNAc...) asparagine). Asp312 acts as the Charge relay system in catalysis. Residues 380 to 400 traverse the membrane as a helical segment; it reads LALLVAAGVLAGELSLCSALS. The active-site Proton donor is the His408.

It belongs to the HMG-CoA reductase family.

It is found in the membrane. It catalyses the reaction (R)-mevalonate + 2 NADP(+) + CoA = (3S)-3-hydroxy-3-methylglutaryl-CoA + 2 NADPH + 2 H(+). It functions in the pathway metabolic intermediate biosynthesis; (R)-mevalonate biosynthesis; (R)-mevalonate from acetyl-CoA: step 3/3. 3-hydroxy-3-methylglutaryl coenzyme A reductase; part of the gene cluster that mediates the biosynthesis of the diterpene ent-pimara-8(14),15-diene (PD). Within the cluster, the HMG-CoA reductase AN1593 functions in the mevalonate pathway, which produces isoprenoid precursors. The geranylgeranyl pyrophosphate (GGPP) synthase AN1592 is needed in the formation of GGPP, the precursor for diterpenes. Lastly, the pimaradiene synthase pbcA performs the 2 cyclization steps that convert GGPP to ent-pimara-8(14),15-diene. The putative roles of the remaining cluster enzymes in ent-pimara-8(14),15-diene biosynthesis is unclear. The cytochrome P450 monooxygenase AN1598, the glutathione S-transferase AN1595, the oxidoreductases AN1596 and AN1597 probably function as decorative enzymes. It is possible that in biological conditions the compound is oxidized to ent-pimara-8(14),15-dien-19-oic acid, which is a bioactive diterpene compound predominant in many plant extracts. This is 3-hydroxy-3-methylglutaryl coenzyme A reductase AN1593 from Emericella nidulans (strain FGSC A4 / ATCC 38163 / CBS 112.46 / NRRL 194 / M139) (Aspergillus nidulans).